The sequence spans 337 residues: Putative NAC domain-containing protein 94 (337 aa).

The region spanning 20–191 (VLPGFRFHPT…AWAICRIFKK (172 aa)) is the NAC domain.

The protein localises to the nucleus. The polypeptide is Putative NAC domain-containing protein 94 (ANAC094) (Arabidopsis thaliana (Mouse-ear cress)).